Consider the following 188-residue polypeptide: MSMPTMTLVNQLLIALPSMPDPHFARGVALICQHDSNGAMGVVLNRPSEYTLGEVLFQMGIETASETLREQVVLAGGPVHPDRGFVIYDSEHVWGPSLLIGDGLYLTTSRDVLAAMAEGSGPSRALVALGCAGWAAGQLELELVENNWLMVPADASLLFDTALEQRWQRAAGRIGVDLFRLTDYTGHA.

Belongs to the UPF0301 (AlgH) family.

This Xylella fastidiosa (strain Temecula1 / ATCC 700964) protein is UPF0301 protein PD_1276.